The sequence spans 33 residues: Cytochrome b6-f complex subunit 8 (33 aa).

Residues Leu2–Val22 traverse the membrane as a helical segment.

This sequence belongs to the PetN family. As to quaternary structure, the 4 large subunits of the cytochrome b6-f complex are cytochrome b6, subunit IV (17 kDa polypeptide, PetD), cytochrome f and the Rieske protein, while the 4 small subunits are PetG, PetL, PetM and PetN. The complex functions as a dimer.

The protein resides in the cellular thylakoid membrane. Its function is as follows. Component of the cytochrome b6-f complex, which mediates electron transfer between photosystem II (PSII) and photosystem I (PSI), cyclic electron flow around PSI, and state transitions. The protein is Cytochrome b6-f complex subunit 8 of Synechococcus sp. (strain CC9605).